The primary structure comprises 151 residues: Small ribosomal subunit protein uS15 (151 aa).

Residue Lys27 is modified to N6-acetyllysine; alternate. Lys27 is modified (N6-succinyllysine; alternate). A Glycyl lysine isopeptide (Lys-Gly) (interchain with G-Cter in ubiquitin) cross-link involves residue Lys27. At Ser30 the chain carries Phosphoserine. Lys34 is subject to N6-succinyllysine. The residue at position 38 (Tyr38) is a Phosphotyrosine. Lys43 participates in a covalent cross-link: Glycyl lysine isopeptide (Lys-Gly) (interchain with G-Cter in SUMO2).

This sequence belongs to the universal ribosomal protein uS15 family. As to quaternary structure, component of the small ribosomal subunit. Part of the small subunit (SSU) processome, composed of more than 70 proteins and the RNA chaperone small nucleolar RNA (snoRNA) U3. Ubiquitinated at Lys-27 by RNF14 and RNF25 in response to ribosome collisions (ribosome stalling).

It is found in the cytoplasm. The protein localises to the nucleus. Its subcellular location is the nucleolus. In terms of biological role, component of the small ribosomal subunit. The ribosome is a large ribonucleoprotein complex responsible for the synthesis of proteins in the cell. Part of the small subunit (SSU) processome, first precursor of the small eukaryotic ribosomal subunit. During the assembly of the SSU processome in the nucleolus, many ribosome biogenesis factors, an RNA chaperone and ribosomal proteins associate with the nascent pre-rRNA and work in concert to generate RNA folding, modifications, rearrangements and cleavage as well as targeted degradation of pre-ribosomal RNA by the RNA exosome. This is Small ribosomal subunit protein uS15 (RPS13) from Cricetulus griseus (Chinese hamster).